A 314-amino-acid polypeptide reads, in one-letter code: uncharacterized protein (314 aa).

The protein belongs to the carbohydrate kinase PfkB family.

This is an uncharacterized protein from Buchnera aphidicola subsp. Schizaphis graminum (strain Sg).